The following is a 326-amino-acid chain: PDZ domain-containing protein MAGIX (326 aa).

Residues Met-1–Leu-32 form a disordered region. The PDZ domain maps to Ser-128–Gln-212. The disordered stretch occupies residues Met-214–Val-267. Basic and acidic residues predominate over residues Arg-218 to Glu-242. Ser-263 carries the phosphoserine modification.

The sequence is that of PDZ domain-containing protein MAGIX (Magix) from Rattus norvegicus (Rat).